Consider the following 506-residue polypeptide: Probable Xaa-Pro aminopeptidase BDBG_08406 (506 aa).

Mn(2+) contacts are provided by Asp-285, Asp-296, Glu-433, and Glu-471.

It belongs to the peptidase M24B family. Requires Mn(2+) as cofactor.

It catalyses the reaction Release of any N-terminal amino acid, including proline, that is linked to proline, even from a dipeptide or tripeptide.. Functionally, catalyzes the removal of a penultimate prolyl residue from the N-termini of peptides. The chain is Probable Xaa-Pro aminopeptidase BDBG_08406 from Blastomyces gilchristii (strain SLH14081) (Blastomyces dermatitidis).